A 324-amino-acid chain; its full sequence is Acetyl-coenzyme A carboxylase carboxyl transferase subunit alpha (324 aa).

The CoA carboxyltransferase C-terminal domain maps to 37–291 (ILEDKLENLE…DLMIRKTFEQ (255 aa)).

Belongs to the AccA family. Acetyl-CoA carboxylase is a heterohexamer composed of biotin carboxyl carrier protein (AccB), biotin carboxylase (AccC) and two subunits each of ACCase subunit alpha (AccA) and ACCase subunit beta (AccD).

It localises to the cytoplasm. It catalyses the reaction N(6)-carboxybiotinyl-L-lysyl-[protein] + acetyl-CoA = N(6)-biotinyl-L-lysyl-[protein] + malonyl-CoA. It functions in the pathway lipid metabolism; malonyl-CoA biosynthesis; malonyl-CoA from acetyl-CoA: step 1/1. Component of the acetyl coenzyme A carboxylase (ACC) complex. First, biotin carboxylase catalyzes the carboxylation of biotin on its carrier protein (BCCP) and then the CO(2) group is transferred by the carboxyltransferase to acetyl-CoA to form malonyl-CoA. The chain is Acetyl-coenzyme A carboxylase carboxyl transferase subunit alpha from Bacillus cereus (strain G9842).